The primary structure comprises 384 residues: MSLAKKIDDDEKQLVKPVNKEQTYKKPIPLEEDDYIEGLSYIIQQQYFPDLPKLKAEVVLESEEVGSFDAQNESRDEKLKYLIAKNSEDPLRKRLPSLAIHEITKAQLDGENKPISVASYQNKFTSEDNASFGELMEDESRLRAEQHKRRFGVHSQQPSNSIQTIGYSNSDAIKSIAWKEKDKSIKTWNYQPKNALMYTPETNHSSSLSQIKKQSTEIQADATGLSQSFLEAANQPSTDPIVPPSVNETDASVNGYPLVDVNFGQAVGSSSKSYFNIPERPRRERLHAMRVRDIRSHSTNTTITSVDSASTALNSYSTPNSVSRKLTNLTPAARRLVARSYLRSPLHGSSPSASRHTALRTSIPKFSWTPTPRVKSTAPTPKRV.

Disordered stretches follow at residues 1 to 22 (MSLA…NKEQ) and 344 to 384 (SPLH…PKRV).

Belongs to the ESS2 family. Heterodimer with ish1.

Its subcellular location is the nucleus. It localises to the cytoplasm. The protein localises to the cytoskeleton. The protein resides in the spindle. Its function is as follows. Has a role in maintaining cell viability during stationary phase induced by stress response. May be involved in pre-mRNA splicing. This chain is Stress response protein bis1 (bis1), found in Schizosaccharomyces pombe (strain 972 / ATCC 24843) (Fission yeast).